Consider the following 397-residue polypeptide: Torsin-3A (397 aa).

The signal sequence occupies residues M1 to G25. N122 carries N-linked (GlcNAc...) asparagine glycosylation. G167–N174 is a binding site for ATP.

It belongs to the ClpA/ClpB family. Torsin subfamily. In terms of assembly, may not form homohexamers. In terms of processing, N-glycosylated. In terms of tissue distribution, ubiquitously expressed. Highest expression in stomach, salivary glands and lymph nodes. Isoform 2 is expressed in placenta.

The protein resides in the cytoplasm. It localises to the endoplasmic reticulum lumen. In Homo sapiens (Human), this protein is Torsin-3A (TOR3A).